We begin with the raw amino-acid sequence, 191 residues long: uncharacterized protein (191 aa).

The signal sequence occupies residues 1–23; sequence MKKTMSAITAAAAVTSCFTGFGA.

This is an uncharacterized protein from Bacillus subtilis (strain 168).